The sequence spans 101 residues: Hg-scorpine-like-2 (101 aa).

Positions 1-17 (MKLTILILLVITSFCSC) are cleaved as a signal peptide. In terms of domain architecture, BetaSPN-type CS-alpha/beta spans 60-100 (QQLCMFNKDVAGWCEKSCQQSAHQKGYCHGTKCKCGIPLNY). Intrachain disulfides connect Cys-63–Cys-87, Cys-73–Cys-92, and Cys-77–Cys-94.

Belongs to the long chain scorpion toxin family. Class 3 subfamily. In terms of tissue distribution, expressed by the venom gland.

Its subcellular location is the secreted. Functionally, inhibits voltage-gated potassium channels. This chain is Hg-scorpine-like-2, found in Hoffmannihadrurus gertschi (Scorpion).